The chain runs to 458 residues: UDP-N-acetylmuramoylalanine--D-glutamate ligase (458 aa).

Gly-124–Thr-130 contributes to the ATP binding site.

The protein belongs to the MurCDEF family.

The protein resides in the cytoplasm. It carries out the reaction UDP-N-acetyl-alpha-D-muramoyl-L-alanine + D-glutamate + ATP = UDP-N-acetyl-alpha-D-muramoyl-L-alanyl-D-glutamate + ADP + phosphate + H(+). It functions in the pathway cell wall biogenesis; peptidoglycan biosynthesis. Its function is as follows. Cell wall formation. Catalyzes the addition of glutamate to the nucleotide precursor UDP-N-acetylmuramoyl-L-alanine (UMA). This chain is UDP-N-acetylmuramoylalanine--D-glutamate ligase, found in Clostridium botulinum (strain Okra / Type B1).